Consider the following 337-residue polypeptide: MKNDNKLQKEALMRLSQLRFPFADAPSIVQAHQKDEQIQGLLIMKVTELCKLIKSQLFVNSYPKELSIFAKLLYLLFTTGRRGRTLGEEYVDLTYTNRKGTRLAGRLKMIVFAFAYPLCPYFITKLYKKIMKNNKESKIEDTESVAAFCKGLLDFILDVHMTLFYFKGAFYSISKRIFGMRYVFKHILSKNEANFREEGSQKYKVLGYILLAQNVMKWYPVLTSTLGSWIYGRKRTNDSITRSSVGLQERSEHESIEGIPKESQLTHINLSDKNQLPFIPEASRKCILCLMNMSDPSCAPCGHLFCWSCLMSWCKERPECPLCRQHCQPQEILVLRQ.

Residues 1–24 (MKNDNKLQKEALMRLSQLRFPFAD) are Peroxisomal matrix-facing. Residues 25–54 (APSIVQAHQKDEQIQGLLIMKVTELCKLIK) traverse the membrane as a helical segment. A topological domain (cytoplasmic) is located at residue serine 55. The helical transmembrane segment at 56–77 (QLFVNSYPKELSIFAKLLYLLF) threads the bilayer. Residues 78 to 105 (TTGRRGRTLGEEYVDLTYTNRKGTRLAG) are Peroxisomal matrix-facing. The helical transmembrane segment at 106–138 (RLKMIVFAFAYPLCPYFITKLYKKIMKNNKESK) threads the bilayer. Residues 139 to 145 (IEDTESV) lie on the Cytoplasmic side of the membrane. A helical membrane pass occupies residues 146–166 (AAFCKGLLDFILDVHMTLFYF). Residues 167–202 (KGAFYSISKRIFGMRYVFKHILSKNEANFREEGSQK) lie on the Peroxisomal matrix side of the membrane. The chain crosses the membrane as a helical span at residues 203-222 (YKVLGYILLAQNVMKWYPVL). Residues 223-337 (TSTLGSWIYG…QPQEILVLRQ (115 aa)) lie on the Cytoplasmic side of the membrane. Residues cysteine 286, cysteine 289, cysteine 301, histidine 303, cysteine 306, cysteine 309, cysteine 320, and cysteine 323 each contribute to the Zn(2+) site. The RING-type zinc finger occupies 286 to 327 (CILCLMNMSDPSCAPCGHLFCWSCLMSWCKERPECPLCRQHC).

Belongs to the pex2/pex10/pex12 family. In terms of assembly, component of the PEX2-PEX10-PEX12 retrotranslocation channel, composed of PEX2, PEX10 and PEX12.

It localises to the peroxisome membrane. It carries out the reaction S-ubiquitinyl-[E2 ubiquitin-conjugating enzyme]-L-cysteine + [acceptor protein]-L-lysine = [E2 ubiquitin-conjugating enzyme]-L-cysteine + N(6)-ubiquitinyl-[acceptor protein]-L-lysine.. It participates in protein modification; protein ubiquitination. The E3 ubiquitin-protein ligase activity is stimulated by PEX12. In terms of biological role, E3 ubiquitin-protein ligase component of a retrotranslocation channel required for peroxisome organization by mediating export of the PEX5 receptor from peroxisomes to the cytosol, thereby promoting PEX5 recycling. The retrotranslocation channel is composed of PEX2, PEX10 and PEX12; each subunit contributing transmembrane segments that coassemble into an open channel that specifically allows the passage of PEX5 through the peroxisomal membrane. PEX10 also regulates PEX5 recycling by acting as a E3 ubiquitin-protein ligase. When PEX5 recycling is compromised, PEX10 catalyzes polyubiquitination of PEX5 during its passage through the retrotranslocation channel, leading to its degradation. The polypeptide is Peroxisome biogenesis factor 10 (Saccharomyces cerevisiae (strain ATCC 204508 / S288c) (Baker's yeast)).